The following is a 557-amino-acid chain: Urocanate hydratase (557 aa).

Positions 1 to 20 (MSNPRHNEREVRSPRGDELN) are disordered. Residues 52 to 53 (GG), Gln130, 176 to 178 (GMG), Glu196, Arg201, 242 to 243 (NA), 263 to 267 (QTSAH), 273 to 274 (YL), and Tyr322 contribute to the NAD(+) site. Cys410 is an active-site residue. Gly492 provides a ligand contact to NAD(+).

Belongs to the urocanase family. The cofactor is NAD(+).

It localises to the cytoplasm. It catalyses the reaction 4-imidazolone-5-propanoate = trans-urocanate + H2O. It functions in the pathway amino-acid degradation; L-histidine degradation into L-glutamate; N-formimidoyl-L-glutamate from L-histidine: step 2/3. In terms of biological role, catalyzes the conversion of urocanate to 4-imidazolone-5-propionate. The protein is Urocanate hydratase of Brucella melitensis biotype 1 (strain ATCC 23456 / CCUG 17765 / NCTC 10094 / 16M).